Here is a 227-residue protein sequence, read N- to C-terminus: tRNA (guanine-N(1)-)-methyltransferase (227 aa).

S-adenosyl-L-methionine is bound by residues G107 and 127 to 132 (LGDFIL).

This sequence belongs to the RNA methyltransferase TrmD family. In terms of assembly, homodimer.

It localises to the cytoplasm. The enzyme catalyses guanosine(37) in tRNA + S-adenosyl-L-methionine = N(1)-methylguanosine(37) in tRNA + S-adenosyl-L-homocysteine + H(+). In terms of biological role, specifically methylates guanosine-37 in various tRNAs. In Mesomycoplasma hyopneumoniae (strain 232) (Mycoplasma hyopneumoniae), this protein is tRNA (guanine-N(1)-)-methyltransferase.